The chain runs to 631 residues: Mercuric reductase (631 aa).

2 consecutive HMA domains span residues 2-66 (KKYR…YHPG) and 81-145 (KKYR…YQPG). Residues Cys-13, Cys-16, Cys-92, and Cys-95 each contribute to the a metal cation site. FAD is bound by residues Ala-181, Gly-201, and Thr-206. The cysteines at positions 207 and 212 are disulfide-linked. The FAD site is built by Lys-216, Asp-472, and Val-480. Residues Cys-628 and Cys-629 each contribute to the Hg(2+) site.

The protein belongs to the class-I pyridine nucleotide-disulfide oxidoreductase family. In terms of assembly, homodimer. FAD is required as a cofactor.

The enzyme catalyses Hg + NADP(+) + H(+) = Hg(2+) + NADPH. Its function is as follows. Resistance to Hg(2+) in bacteria appears to be governed by a specialized system which includes mercuric reductase. MerA protein is responsible for volatilizing mercury as Hg(0). The chain is Mercuric reductase (merA) from Bacillus cereus.